We begin with the raw amino-acid sequence, 228 residues long: Ribosomal RNA small subunit methyltransferase G (228 aa).

S-adenosyl-L-methionine is bound by residues Gly-89, Leu-94, 140 to 141, and Arg-159; that span reads VE.

The protein belongs to the methyltransferase superfamily. RNA methyltransferase RsmG family.

The protein resides in the cytoplasm. The enzyme catalyses guanosine(527) in 16S rRNA + S-adenosyl-L-methionine = N(7)-methylguanosine(527) in 16S rRNA + S-adenosyl-L-homocysteine. Specifically methylates the N7 position of guanine in position 527 of 16S rRNA. This is Ribosomal RNA small subunit methyltransferase G from Burkholderia lata (strain ATCC 17760 / DSM 23089 / LMG 22485 / NCIMB 9086 / R18194 / 383).